A 117-amino-acid polypeptide reads, in one-letter code: Large ribosomal subunit protein bL20 (117 aa).

The protein belongs to the bacterial ribosomal protein bL20 family.

Its function is as follows. Binds directly to 23S ribosomal RNA and is necessary for the in vitro assembly process of the 50S ribosomal subunit. It is not involved in the protein synthesizing functions of that subunit. The chain is Large ribosomal subunit protein bL20 from Histophilus somni (strain 129Pt) (Haemophilus somnus).